A 254-amino-acid chain; its full sequence is Type III pantothenate kinase (254 aa).

An ATP-binding site is contributed by 6 to 13 (DVGNTNTV). Residues Tyr100 and 107 to 110 (GADR) contribute to the substrate site. Asp109 (proton acceptor) is an active-site residue. Asp129 contacts K(+). Thr132 is an ATP binding site. Thr184 lines the substrate pocket.

Belongs to the type III pantothenate kinase family. In terms of assembly, homodimer. The cofactor is NH4(+). K(+) serves as cofactor.

It is found in the cytoplasm. It catalyses the reaction (R)-pantothenate + ATP = (R)-4'-phosphopantothenate + ADP + H(+). It participates in cofactor biosynthesis; coenzyme A biosynthesis; CoA from (R)-pantothenate: step 1/5. Functionally, catalyzes the phosphorylation of pantothenate (Pan), the first step in CoA biosynthesis. In Halalkalibacterium halodurans (strain ATCC BAA-125 / DSM 18197 / FERM 7344 / JCM 9153 / C-125) (Bacillus halodurans), this protein is Type III pantothenate kinase.